The chain runs to 90 residues: DNA-directed RNA polymerase subunit omega (90 aa).

The protein belongs to the RNA polymerase subunit omega family. In terms of assembly, the RNAP catalytic core consists of 2 alpha, 1 beta, 1 beta' and 1 omega subunit. When a sigma factor is associated with the core the holoenzyme is formed, which can initiate transcription.

It catalyses the reaction RNA(n) + a ribonucleoside 5'-triphosphate = RNA(n+1) + diphosphate. Its function is as follows. Promotes RNA polymerase assembly. Latches the N- and C-terminal regions of the beta' subunit thereby facilitating its interaction with the beta and alpha subunits. The sequence is that of DNA-directed RNA polymerase subunit omega (rpoZ) from Streptomyces coelicolor (strain ATCC BAA-471 / A3(2) / M145).